Consider the following 788-residue polypeptide: Endonuclease MutS2 (788 aa).

332–339 contributes to the ATP binding site; it reads GPNTGGKT. Residues 713–788 form the Smr domain; the sequence is VDLRGMDAEE…GTGVTVVELK (76 aa).

The protein belongs to the DNA mismatch repair MutS family. MutS2 subfamily. In terms of assembly, homodimer. Binds to stalled ribosomes, contacting rRNA.

Functionally, endonuclease that is involved in the suppression of homologous recombination and thus may have a key role in the control of bacterial genetic diversity. Its function is as follows. Acts as a ribosome collision sensor, splitting the ribosome into its 2 subunits. Detects stalled/collided 70S ribosomes which it binds and splits by an ATP-hydrolysis driven conformational change. Acts upstream of the ribosome quality control system (RQC), a ribosome-associated complex that mediates the extraction of incompletely synthesized nascent chains from stalled ribosomes and their subsequent degradation. Probably generates substrates for RQC. This is Endonuclease MutS2 from Clostridium botulinum (strain Okra / Type B1).